The following is a 151-amino-acid chain: 3-hydroxyacyl-[acyl-carrier-protein] dehydratase FabZ (151 aa).

The active site involves His56.

Belongs to the thioester dehydratase family. FabZ subfamily.

It is found in the cytoplasm. The catalysed reaction is a (3R)-hydroxyacyl-[ACP] = a (2E)-enoyl-[ACP] + H2O. In terms of biological role, involved in unsaturated fatty acids biosynthesis. Catalyzes the dehydration of short chain beta-hydroxyacyl-ACPs and long chain saturated and unsaturated beta-hydroxyacyl-ACPs. This Rhodopseudomonas palustris (strain BisB18) protein is 3-hydroxyacyl-[acyl-carrier-protein] dehydratase FabZ.